The following is a 666-amino-acid chain: Protein-arginine deiminase type-4 (666 aa).

Ca(2+) is bound by residues asparagine 153, aspartate 155, aspartate 165, aspartate 168, aspartate 176, and aspartate 179. Arginine 212 and arginine 218 each carry citrulline. Residue glutamine 349 coordinates Ca(2+). Aspartate 350 is an active-site residue. Ca(2+) contacts are provided by glutamate 351, glutamate 353, aspartate 369, and serine 370. Citrulline occurs at positions 372, 374, and 383. Substrate is bound at residue arginine 374. The Ca(2+) site is built by phenylalanine 407, leucine 410, and glutamate 411. Catalysis depends on residues histidine 471, aspartate 473, and cysteine 648.

The protein belongs to the protein arginine deiminase family. It depends on Ca(2+) as a cofactor. Autocitrullination at Arg-372 and Arg-374 inactivates the enzyme. As to expression, expressed in pluripotent embryonic stem and induced pluripotent stem cells but not multipotent neural stem cells.

It is found in the cytoplasm. The protein localises to the nucleus. The protein resides in the cytoplasmic granule. The catalysed reaction is L-arginyl-[protein] + H2O = L-citrullyl-[protein] + NH4(+). Its activity is regulated as follows. Strongly Inhibited by F-amidine and N-alpha-benzoyl-N5-(2-chloro-1-iminoethyl)-L-ornithine amide (Cl-amidine). These inhibitors are however not specific to PADI4 and also inhibit other members of the family. In terms of biological role, catalyzes the citrullination/deimination of arginine residues of proteins such as histones, thereby playing a key role in histone code and regulation of stem cell maintenance. Citrullinates histone H1 at 'Arg-54' (to form H1R54ci), histone H3 at 'Arg-2', 'Arg-8', 'Arg-17' and/or 'Arg-26' (to form H3R2ci, H3R8ci, H3R17ci, H3R26ci, respectively) and histone H4 at 'Arg-3' (to form H4R3ci). Acts as a key regulator of stem cell maintenance by mediating citrullination of histone H1: citrullination of 'Arg-54' of histone H1 (H1R54ci) results in H1 displacement from chromatin and global chromatin decondensation, thereby promoting pluripotency and stem cell maintenance. Promotes profound chromatin decondensation during the innate immune response to infection in neutrophils by mediating formation of H1R54ci. Required for the formation of neutrophil extracellular traps (NETs); NETs are mainly composed of DNA fibers and are released by neutrophils to bind pathogens during inflammation. Citrullination of histone H3 prevents their methylation by CARM1 and HRMT1L2/PRMT1 and represses transcription. Citrullinates EP300/P300 at 'Arg-2142', which favors its interaction with NCOA2/GRIP1. In Mus musculus (Mouse), this protein is Protein-arginine deiminase type-4 (Padi4).